Consider the following 131-residue polypeptide: Small ribosomal subunit protein uS9 (131 aa).

This sequence belongs to the universal ribosomal protein uS9 family.

The sequence is that of Small ribosomal subunit protein uS9 from Haemophilus ducreyi (strain 35000HP / ATCC 700724).